Here is a 105-residue protein sequence, read N- to C-terminus: QGGVSVNCGGTYYSSTQVNRAINNAKSGQYSSTGYPHTYNNYEGFDFSDYCDGPYKEYPLKTSSSGYTGGSPGADRVVYDSNDGTFCGAITHTGASGNNFVQCSY.

Glutamine 1 is subject to Pyrrolidone carboxylic acid. 2 cysteine pairs are disulfide-bonded: cysteine 8/cysteine 103 and cysteine 51/cysteine 87. Histidine 37 is an active-site residue. Glutamate 57 (proton acceptor) is an active-site residue. The active-site Proton donor is the histidine 92.

The protein belongs to the ribonuclease N1/T1 family.

The catalysed reaction is [RNA] containing guanosine + H2O = an [RNA fragment]-3'-guanosine-3'-phosphate + a 5'-hydroxy-ribonucleotide-3'-[RNA fragment].. This chain is Guanyl-specific ribonuclease U1, found in Ustilago sphaerogena (Smut fungus).